The chain runs to 1071 residues: DNA-directed RNA polymerase subunit beta (1071 aa).

The protein belongs to the RNA polymerase beta chain family. As to quaternary structure, in plastids the minimal PEP RNA polymerase catalytic core is composed of four subunits: alpha, beta, beta', and beta''. When a (nuclear-encoded) sigma factor is associated with the core the holoenzyme is formed, which can initiate transcription.

It localises to the plastid. Its subcellular location is the chloroplast. The enzyme catalyses RNA(n) + a ribonucleoside 5'-triphosphate = RNA(n+1) + diphosphate. Functionally, DNA-dependent RNA polymerase catalyzes the transcription of DNA into RNA using the four ribonucleoside triphosphates as substrates. This is DNA-directed RNA polymerase subunit beta from Nymphaea alba (White water-lily).